The sequence spans 342 residues: UDP-N-acetylglucosamine--N-acetylmuramyl-(pentapeptide) pyrophosphoryl-undecaprenol N-acetylglucosamine transferase (342 aa).

UDP-N-acetyl-alpha-D-glucosamine contacts are provided by residues 10-12 (TGG), asparagine 124, serine 177, and glutamine 275.

The protein belongs to the glycosyltransferase 28 family. MurG subfamily.

The protein localises to the cell inner membrane. It carries out the reaction di-trans,octa-cis-undecaprenyl diphospho-N-acetyl-alpha-D-muramoyl-L-alanyl-D-glutamyl-meso-2,6-diaminopimeloyl-D-alanyl-D-alanine + UDP-N-acetyl-alpha-D-glucosamine = di-trans,octa-cis-undecaprenyl diphospho-[N-acetyl-alpha-D-glucosaminyl-(1-&gt;4)]-N-acetyl-alpha-D-muramoyl-L-alanyl-D-glutamyl-meso-2,6-diaminopimeloyl-D-alanyl-D-alanine + UDP + H(+). Its pathway is cell wall biogenesis; peptidoglycan biosynthesis. Cell wall formation. Catalyzes the transfer of a GlcNAc subunit on undecaprenyl-pyrophosphoryl-MurNAc-pentapeptide (lipid intermediate I) to form undecaprenyl-pyrophosphoryl-MurNAc-(pentapeptide)GlcNAc (lipid intermediate II). This Campylobacter jejuni (strain RM1221) protein is UDP-N-acetylglucosamine--N-acetylmuramyl-(pentapeptide) pyrophosphoryl-undecaprenol N-acetylglucosamine transferase.